Here is a 693-residue protein sequence, read N- to C-terminus: tRNA (guanine(27)-N(2))-dimethyltransferase (693 aa).

The Nucleolar localization signal signature appears at 95-99; the sequence is HKLRR. The C2H2-type zinc finger occupies 144–166; the sequence is YHCIICSATITRRTDMLGHVRRH. Positions 187–648 constitute a Trm1 methyltransferase domain; that stretch reads EILKEADTDV…APLMQFKSIL (462 aa). Residues arginine 220, aspartate 267, aspartate 317, and alanine 318 each coordinate S-adenosyl-L-methionine. Zn(2+) contacts are provided by cysteine 448, cysteine 451, cysteine 473, and cysteine 475. Lysine 545 is covalently cross-linked (Glycyl lysine isopeptide (Lys-Gly) (interchain with G-Cter in SUMO2)). Residues serine 572 and serine 667 each carry the phosphoserine modification.

The protein belongs to the class I-like SAM-binding methyltransferase superfamily. Trm1 family.

The protein resides in the nucleus. The protein localises to the nucleolus. The enzyme catalyses guanosine(27) in tRNA(Tyr) + 2 S-adenosyl-L-methionine = N(2)-dimethylguanosine(27) in tRNA(Tyr) + 2 S-adenosyl-L-homocysteine + 2 H(+). Specifically dimethylates a single guanine residue at position 27 of tRNA(Tyr) using S-adenosyl-L-methionine as donor of the methyl groups. Dimethylation at position 27 of tRNA(Tyr) is required for efficient translation of tyrosine codons. Also required to maintain 3-(3-amino-3-carboxypropyl)uridine (acp3U) in the D-loop of several cytoplasmic tRNAs. This is tRNA (guanine(27)-N(2))-dimethyltransferase (TRMT1L) from Macaca fascicularis (Crab-eating macaque).